Here is a 289-residue protein sequence, read N- to C-terminus: Bifunctional protein FolD (289 aa).

NADP(+)-binding positions include 165 to 167 and Ser-190; that span reads GAS.

This sequence belongs to the tetrahydrofolate dehydrogenase/cyclohydrolase family. In terms of assembly, homodimer.

The enzyme catalyses (6R)-5,10-methylene-5,6,7,8-tetrahydrofolate + NADP(+) = (6R)-5,10-methenyltetrahydrofolate + NADPH. It carries out the reaction (6R)-5,10-methenyltetrahydrofolate + H2O = (6R)-10-formyltetrahydrofolate + H(+). The protein operates within one-carbon metabolism; tetrahydrofolate interconversion. Functionally, catalyzes the oxidation of 5,10-methylenetetrahydrofolate to 5,10-methenyltetrahydrofolate and then the hydrolysis of 5,10-methenyltetrahydrofolate to 10-formyltetrahydrofolate. The chain is Bifunctional protein FolD from Ralstonia pickettii (strain 12J).